The primary structure comprises 203 residues: Dephospho-CoA kinase (203 aa).

In terms of domain architecture, DPCK spans 6–203; the sequence is KVAITGGLSC…ELYQELKIYI (198 aa). 14–19 is a binding site for ATP; it reads SCGKSS.

It belongs to the CoaE family.

It localises to the cytoplasm. The enzyme catalyses 3'-dephospho-CoA + ATP = ADP + CoA + H(+). It functions in the pathway cofactor biosynthesis; coenzyme A biosynthesis; CoA from (R)-pantothenate: step 5/5. Functionally, catalyzes the phosphorylation of the 3'-hydroxyl group of dephosphocoenzyme A to form coenzyme A. The sequence is that of Dephospho-CoA kinase from Protochlamydia amoebophila (strain UWE25).